The sequence spans 263 residues: Heat-labile enterotoxin IIB, A chain (263 aa).

The signal sequence occupies residues 1–20 (MAKVISFFISLFLISFPLYA). NAD(+) is bound at residue 26-39 (ADSRTPDEVRRSGG). Residue glutamate 130 is part of the active site. A disulfide bond links cysteine 205 and cysteine 217.

Belongs to the enterotoxin A family. In terms of assembly, heterohexamer of one A chain and of five B chains.

In terms of biological role, the biological activity of the toxin is produced by the A chain, which activates intracellular adenyl cyclase. The sequence is that of Heat-labile enterotoxin IIB, A chain from Escherichia coli.